Here is a 357-residue protein sequence, read N- to C-terminus: Eukaryotic translation initiation factor 3 subunit F (357 aa).

The segment at 1-82 is disordered; the sequence is MATPAVPVSA…PAPALPGPAL (82 aa). A2 is modified (N-acetylalanine). Over residues 9–36 the composition is skewed to pro residues; sequence SAPPATPTPVPAAAPASVPAPTPAPAAA. Residues 37–74 show a composition bias toward low complexity; it reads PVPAAAPASSSDPAAAAAATAAPGQTPASAQAPAQTPA. S46 is modified (phosphoserine; by CDK11; in vitro). In terms of domain architecture, MPN spans 92–222; sequence VRLHPVILAS…IKAYVSTLMG (131 aa). K238 bears the N6-acetyllysine mark. Residue S258 is modified to Phosphoserine.

The protein belongs to the eIF-3 subunit F family. Component of the eukaryotic translation initiation factor 3 (eIF-3) complex, which is composed of 13 subunits: EIF3A, EIF3B, EIF3C, EIF3D, EIF3E, EIF3F, EIF3G, EIF3H, EIF3I, EIF3J, EIF3K, EIF3L and EIF3M. The eIF-3 complex appears to include 3 stable modules: module A is composed of EIF3A, EIF3B, EIF3G and EIF3I; module B is composed of EIF3F, EIF3H, and EIF3M; and module C is composed of EIF3C, EIF3D, EIF3E, EIF3K and EIF3L. EIF3C of module C binds EIF3B of module A and EIF3H of module B, thereby linking the three modules. EIF3J is a labile subunit that binds to the eIF-3 complex via EIF3B. The eIF-3 complex interacts with RPS6KB1 under conditions of nutrient depletion. Mitogenic stimulation leads to binding and activation of a complex composed of MTOR and RPTOR, leading to phosphorylation and release of RPS6KB1 and binding of EIF4B to eIF-3. Interacts with RNF139; the interaction leads to protein translation inhibitions in a ubiquitination-dependent manner. Interacts with DTX1, the interaction is required for deubiquitinating activity towards NOTCH1. Post-translationally, phosphorylation is enhanced upon serum stimulation. Phosphorylated during apoptosis by caspase-processed CDK11.

The protein resides in the cytoplasm. It catalyses the reaction Thiol-dependent hydrolysis of ester, thioester, amide, peptide and isopeptide bonds formed by the C-terminal Gly of ubiquitin (a 76-residue protein attached to proteins as an intracellular targeting signal).. Functionally, component of the eukaryotic translation initiation factor 3 (eIF-3) complex, which is required for several steps in the initiation of protein synthesis. The eIF-3 complex associates with the 40S ribosome and facilitates the recruitment of eIF-1, eIF-1A, eIF-2:GTP:methionyl-tRNAi and eIF-5 to form the 43S pre-initiation complex (43S PIC). The eIF-3 complex stimulates mRNA recruitment to the 43S PIC and scanning of the mRNA for AUG recognition. The eIF-3 complex is also required for disassembly and recycling of post-termination ribosomal complexes and subsequently prevents premature joining of the 40S and 60S ribosomal subunits prior to initiation. The eIF-3 complex specifically targets and initiates translation of a subset of mRNAs involved in cell proliferation, including cell cycling, differentiation and apoptosis, and uses different modes of RNA stem-loop binding to exert either translational activation or repression. In terms of biological role, deubiquitinates activated NOTCH1, promoting its nuclear import, thereby acting as a positive regulator of Notch signaling. In Homo sapiens (Human), this protein is Eukaryotic translation initiation factor 3 subunit F.